The sequence spans 464 residues: Uronate isomerase (464 aa).

Belongs to the metallo-dependent hydrolases superfamily. Uronate isomerase family.

It catalyses the reaction D-glucuronate = D-fructuronate. The catalysed reaction is aldehydo-D-galacturonate = keto-D-tagaturonate. It participates in carbohydrate metabolism; pentose and glucuronate interconversion. This Caldicellulosiruptor bescii (strain ATCC BAA-1888 / DSM 6725 / KCTC 15123 / Z-1320) (Anaerocellum thermophilum) protein is Uronate isomerase.